The primary structure comprises 142 residues: MELTKIATQNDINRQWIVLDAKDKVFGRLITEIATLLRGKHKPCFTPHIDCGDFVVIINATEVKFTGMKLKDKEYFTHSGYFGSTKSKTLQEMLEKTPEKLYHLAVRGMLPKNKLGRAMLKKLKVYRGSEHPHSAQVAKSSK.

It belongs to the universal ribosomal protein uL13 family. Part of the 50S ribosomal subunit.

In terms of biological role, this protein is one of the early assembly proteins of the 50S ribosomal subunit, although it is not seen to bind rRNA by itself. It is important during the early stages of 50S assembly. The chain is Large ribosomal subunit protein uL13 from Helicobacter hepaticus (strain ATCC 51449 / 3B1).